The chain runs to 361 residues: Aminomethyltransferase (361 aa).

The protein belongs to the GcvT family. As to quaternary structure, the glycine cleavage system is composed of four proteins: P, T, L and H.

The enzyme catalyses N(6)-[(R)-S(8)-aminomethyldihydrolipoyl]-L-lysyl-[protein] + (6S)-5,6,7,8-tetrahydrofolate = N(6)-[(R)-dihydrolipoyl]-L-lysyl-[protein] + (6R)-5,10-methylene-5,6,7,8-tetrahydrofolate + NH4(+). In terms of biological role, the glycine cleavage system catalyzes the degradation of glycine. The sequence is that of Aminomethyltransferase from Herpetosiphon aurantiacus (strain ATCC 23779 / DSM 785 / 114-95).